The sequence spans 285 residues: Probable endonuclease 4 (285 aa).

His69, His109, Glu145, Asp179, His182, His216, Asp229, His231, and Glu261 together coordinate Zn(2+).

It belongs to the AP endonuclease 2 family. It depends on Zn(2+) as a cofactor.

The enzyme catalyses Endonucleolytic cleavage to 5'-phosphooligonucleotide end-products.. In terms of biological role, endonuclease IV plays a role in DNA repair. It cleaves phosphodiester bonds at apurinic or apyrimidinic (AP) sites, generating a 3'-hydroxyl group and a 5'-terminal sugar phosphate. This chain is Probable endonuclease 4, found in Salmonella dublin (strain CT_02021853).